A 1154-amino-acid polypeptide reads, in one-letter code: Voltage-dependent calcium channel subunit alpha-2/delta-2 (1154 aa).

A signal peptide spans 1 to 18 (MAVPARTCGASWPGPVRT). Residues 1-37 (MAVPARTCGASWPGPVRTARPWPGRGPRPCPDPRGPA) form a disordered region. At 19–1116 (ARPWPGRGPR…TEDTSDCGRG (1098 aa)) the chain is on the extracellular side. The span at 24–34 (GRGPRPCPDPR) shows a compositional bias: pro residues. N205 is a glycosylation site (N-linked (GlcNAc...) asparagine). Residues 294-472 (DMVIIVDVSG…INTQEYLDVL (179 aa)) form the VWFA domain. Positions 300, 302, and 304 each coordinate a divalent metal cation. The MIDAS-like motif motif lies at 300-304 (DVSGS). N-linked (GlcNAc...) asparagine glycosylation is found at N389, N421, N510, N543, N627, and N864. Residues C446 and C1101 are joined by a disulfide bond. The Cache domain maps to 488-577 (WTNVYEDALG…KPQTTNFREP (90 aa)). A helical transmembrane segment spans residues 1117–1137 (ASFPPSLGVLVSLQLLLLLGL). At 1138-1154 (PPRPQPQVHSFAASRHL) the chain is on the cytoplasmic side.

Belongs to the calcium channel subunit alpha-2/delta family. Dimer formed of alpha-2-2 and delta-2 chains; disulfide-linked. Voltage-dependent calcium channels are multisubunit complexes, consisting of alpha-1 (CACNA1), alpha-2 (CACNA2D), beta (CACNB) and delta (CACNA2D) subunits in a 1:1:1:1 ratio. N-glycosylated. Post-translationally, may be proteolytically processed into subunits alpha-2-2 and delta-2 that are disulfide-linked. It is however unclear whether such cleavage really takes place in vivo and has a functional role. According to PubMed:11306709, it is processed, at least in vitro, while according to PubMed:17052222, it is only poorly processed in vivo. In terms of tissue distribution, predominantly expressed in brain in a restricted pattern. Also expressed at lower level in kidney and testis Not expressed in lung at any moment of development. In brain, it localizes to sections of P21 brain. Expressed at high level in the cerebellum, with moderate levels in medulla, pons, and striatum. Also expressed in cortex, hippocampus, habenula and nucleus reticularis thalami (nRT). Strongly expressed in cerebellar Purkinje cells.

The protein localises to the membrane. In terms of biological role, the alpha-2/delta subunit of voltage-dependent calcium channels regulates calcium current density and activation/inactivation kinetics of the calcium channel. Acts as a regulatory subunit for P/Q-type calcium channel (CACNA1A), N-type (CACNA1B), L-type (CACNA1C OR CACNA1D) and possibly T-type (CACNA1G). This Mus musculus (Mouse) protein is Voltage-dependent calcium channel subunit alpha-2/delta-2 (Cacna2d2).